We begin with the raw amino-acid sequence, 61 residues long: Toxin S5C1 (61 aa).

4 disulfide bridges follow: Cys3-Cys22, Cys16-Cys39, Cys41-Cys53, and Cys54-Cys59. The short motif at 45–47 (RGD) is the Cell attachment site element.

The protein belongs to the three-finger toxin family. Short-chain subfamily. Antiplatelet toxin sub-subfamily. Expressed by the venom gland.

The protein localises to the secreted. Its function is as follows. Inhibits ADP-induced platelet aggregation and inhibits the binding of purified platelet fibrinogen receptor alpha-IIb/beta-3 (ITGA2B/ITGB3) to immobilized fibrinogen. This chain is Toxin S5C1, found in Dendroaspis jamesoni kaimosae (Eastern Jameson's mamba).